Consider the following 732-residue polypeptide: E3 ubiquitin-protein ligase RNF19B (732 aa).

Positions 1–109 are disordered; the sequence is MGSEKDSESP…PEEDEAAEGG (109 aa). Residues 1–315 are required for ubiquitin ligase activity and for protection against staurosporin-induced cell death; sequence MGSEKDSESP…VCGCEFCWLC (315 aa). Pro residues predominate over residues 54-71; the sequence is AEPPPPAAPPPPPPPAPA. The segment covering 72–99 has biased composition (low complexity); it reads PVEAQAPPVEALPSEPAAEAEAEAVAAG. Acidic residues predominate over residues 100 to 109; sequence PEEDEAAEGG. The TRIAD supradomain stretch occupies residues 112-334; the sequence is EEVECPLCLV…LSPSGCTFWG (223 aa). Zn(2+) contacts are provided by Cys-116, Cys-119, Cys-139, Cys-142, Cys-203, Cys-208, Cys-225, Cys-230, Cys-235, Cys-238, His-243, Cys-248, Cys-284, and Cys-287. Residues 116-165 form an RING-type 1 zinc finger; that stretch reads CPLCLVRLPPERAPRLLSCPHRSCRDCLRHYLRLEISESRVPISCPECSE. The segment at 183-248 adopts an IBR-type zinc-finger fold; that stretch reads HKYEEFMLRR…KQIWHPNQTC (66 aa). The segment at 284–315 adopts an RING-type 2; atypical zinc-finger fold; that stretch reads CPRCSAYIIKMNDGSCNHMTCAVCGCEFCWLC. Cys-299 is an active-site residue. Positions 304, 307, 312, 315, 323, and 330 each coordinate Zn(2+). Transmembrane regions (helical) follow at residues 351-371 and 412-432; these read LIGA…AMVI and VIAA…VYGV. 2 disordered regions span residues 598 to 644 and 660 to 732; these read QLVS…QSCE and QPES…YEVE. Residues 674–683 show a composition bias toward acidic residues; that stretch reads QSDDVPDITS.

It belongs to the RBR family. RNF19 subfamily. As to quaternary structure, interacts with UBE2L3, UBE2L6 and UCKL1. Expressed specifically in natural killer cells, activated macrophages and cytotoxic T-cells. Present in macrophages (at protein level). Ubiquitously expressed with high expression in testis.

Its subcellular location is the cytoplasmic granule membrane. It localises to the endoplasmic reticulum membrane. It catalyses the reaction [E2 ubiquitin-conjugating enzyme]-S-ubiquitinyl-L-cysteine + [acceptor protein]-L-lysine = [E2 ubiquitin-conjugating enzyme]-L-cysteine + [acceptor protein]-N(6)-ubiquitinyl-L-lysine.. The protein operates within protein modification; protein ubiquitination. In terms of biological role, E3 ubiquitin-protein ligase which accepts ubiquitin from E2 ubiquitin-conjugating enzymes UBE2L3 and UBE2L6 in the form of a thioester and then directly transfers the ubiquitin to targeted substrates, such as UCKL1. Involved in the cytolytic activity of natural killer cells and cytotoxic T-cells. Protects against staurosporin-induced cell death. This is E3 ubiquitin-protein ligase RNF19B (Rnf19b) from Mus musculus (Mouse).